The primary structure comprises 358 residues: Leukotriene B4 receptor 2 (358 aa).

At 1 to 24 the chain is on the extracellular side; that stretch reads MSVCYRPPGNETLLSWKGSRATGT. A glycan (N-linked (GlcNAc...) asparagine) is linked at asparagine 10. A helical membrane pass occupies residues 25–45; that stretch reads AFLLLAALLGLPGNGFVVWSL. Topologically, residues 46 to 60 are cytoplasmic; that stretch reads AGWRPTAGRPLAATL. The chain crosses the membrane as a helical span at residues 61–81; the sequence is VLHLALADGAVLLLTPLFVAF. Over 82-96 the chain is Extracellular; that stretch reads LSRQAWPLGQVGCKA. Residues 97–117 form a helical membrane-spanning segment; sequence VYYVCALSMYASVLLTGLLSL. At 118-140 the chain is on the cytoplasmic side; that stretch reads QRCLAVTRPFLAPRLRSPALARR. A helical membrane pass occupies residues 141–161; the sequence is LLLGVWLAALVLAVPAAVYRH. Topologically, residues 162-185 are extracellular; the sequence is LWGDRVCQLCHPSAVHAAAHLSLE. A helical transmembrane segment spans residues 186–206; sequence TLTAFVLPFGTVLGCYGVTLA. Residues 207–225 are Cytoplasmic-facing; sequence RLRGARWGSGRQGTRVGRL. Residues 226-246 traverse the membrane as a helical segment; sequence VSAIVLAFGLLWAPYHAVNLL. Residues 247-275 are Extracellular-facing; that stretch reads QAVAALAPPEGPLARLGGAGQAARAGTTA. The helical transmembrane segment at 276–296 threads the bilayer; that stretch reads LAFFSSSVNPVLYVFTAGDLL. The Cytoplasmic portion of the chain corresponds to 297-358; it reads PRAGPRFLTR…GRMEKDSQEW (62 aa). Residues 315 to 358 are disordered; that stretch reads RVGSRSREGTMELRTTPRLKVVGQGRGYGDPGGGGRMEKDSQEW. Residues 338-349 are compositionally biased toward gly residues; the sequence is QGRGYGDPGGGG.

This sequence belongs to the G-protein coupled receptor 1 family.

Its subcellular location is the cell membrane. Low-affinity receptor for leukotrienes including leukotriene B4. Mediates chemotaxis of granulocytes and macrophages. The response is mediated via G-proteins that activate a phosphatidylinositol-calcium second messenger system. This chain is Leukotriene B4 receptor 2 (Ltb4r2), found in Rattus norvegicus (Rat).